A 186-amino-acid chain; its full sequence is ATP synthase subunit delta (186 aa).

The protein belongs to the ATPase delta chain family. F-type ATPases have 2 components, F(1) - the catalytic core - and F(0) - the membrane proton channel. F(1) has five subunits: alpha(3), beta(3), gamma(1), delta(1), epsilon(1). F(0) has three main subunits: a(1), b(2) and c(10-14). The alpha and beta chains form an alternating ring which encloses part of the gamma chain. F(1) is attached to F(0) by a central stalk formed by the gamma and epsilon chains, while a peripheral stalk is formed by the delta and b chains.

It is found in the cell inner membrane. F(1)F(0) ATP synthase produces ATP from ADP in the presence of a proton or sodium gradient. F-type ATPases consist of two structural domains, F(1) containing the extramembraneous catalytic core and F(0) containing the membrane proton channel, linked together by a central stalk and a peripheral stalk. During catalysis, ATP synthesis in the catalytic domain of F(1) is coupled via a rotary mechanism of the central stalk subunits to proton translocation. In terms of biological role, this protein is part of the stalk that links CF(0) to CF(1). It either transmits conformational changes from CF(0) to CF(1) or is implicated in proton conduction. The polypeptide is ATP synthase subunit delta (Bacteroides fragilis (strain ATCC 25285 / DSM 2151 / CCUG 4856 / JCM 11019 / LMG 10263 / NCTC 9343 / Onslow / VPI 2553 / EN-2)).